The sequence spans 238 residues: Uridylate kinase (238 aa).

12 to 15 (KLSG) serves as a coordination point for ATP. G54 contacts UMP. G55 and R59 together coordinate ATP. UMP contacts are provided by residues D74 and 135-142 (TGNPFFTT). ATP-binding residues include T162, N163, Y168, and D171.

Belongs to the UMP kinase family. As to quaternary structure, homohexamer.

The protein resides in the cytoplasm. The enzyme catalyses UMP + ATP = UDP + ADP. It functions in the pathway pyrimidine metabolism; CTP biosynthesis via de novo pathway; UDP from UMP (UMPK route): step 1/1. Its activity is regulated as follows. Inhibited by UTP. Its function is as follows. Catalyzes the reversible phosphorylation of UMP to UDP. The protein is Uridylate kinase of Rhodopseudomonas palustris (strain BisB18).